Here is a 255-residue protein sequence, read N- to C-terminus: Triosephosphate isomerase (255 aa).

Residue 9 to 11 (NWK) coordinates substrate. The active-site Electrophile is the H100. The Proton acceptor role is filled by E169. Substrate contacts are provided by residues G175, S208, and 229–230 (GG).

The protein belongs to the triosephosphate isomerase family. Homodimer.

The protein localises to the cytoplasm. The enzyme catalyses D-glyceraldehyde 3-phosphate = dihydroxyacetone phosphate. It participates in carbohydrate biosynthesis; gluconeogenesis. It functions in the pathway carbohydrate degradation; glycolysis; D-glyceraldehyde 3-phosphate from glycerone phosphate: step 1/1. Its function is as follows. Involved in the gluconeogenesis. Catalyzes stereospecifically the conversion of dihydroxyacetone phosphate (DHAP) to D-glyceraldehyde-3-phosphate (G3P). The protein is Triosephosphate isomerase of Synechococcus sp. (strain JA-3-3Ab) (Cyanobacteria bacterium Yellowstone A-Prime).